Consider the following 358-residue polypeptide: Transcriptional repressor protein KorB (358 aa).

Over residues 1–42 (MTAAQAKTTKKNTAAAAQEAAGAAQPSGLGLDSIGDLSSLLD) the composition is skewed to low complexity. Disordered stretches follow at residues 1 to 79 (MTAA…FSPE) and 256 to 305 (DPNT…DKLK). Positions 275–285 (AGDGQDGEDGD) are enriched in acidic residues. The segment covering 286-305 (QDGKDAKEKGAKEPDPDKLK) has biased composition (basic and acidic residues).

Belongs to the ParB family.

In conjunction with KorA, inhibits the transcription of the kilA, trfA and korAB operons. Is also involved in the negative control of the kilB operon. This Escherichia coli protein is Transcriptional repressor protein KorB (korB).